The primary structure comprises 186 residues: Transcriptional repressor NrdR (186 aa).

Positions 1 to 24 are disordered; the sequence is MRCPYCGGLDTQVKDSRPSDDASA. A zinc finger lies at 3 to 34; it reads CPYCGGLDTQVKDSRPSDDASAIRRRRICPDC. Over residues 12 to 24 the composition is skewed to basic and acidic residues; that stretch reads QVKDSRPSDDASA. An ATP-cone domain is found at 49–139; the sequence is LTVVKRSGRR…VYKNFREARD (91 aa). The disordered stretch occupies residues 146 to 186; the sequence is RLNGAGRPGGEPEPPDEAAPGPAAAPGEGGEAPARRARSRA.

It belongs to the NrdR family. The cofactor is Zn(2+).

Its function is as follows. Negatively regulates transcription of bacterial ribonucleotide reductase nrd genes and operons by binding to NrdR-boxes. This Methylobacterium sp. (strain 4-46) protein is Transcriptional repressor NrdR.